Consider the following 254-residue polypeptide: MENSYDSSKWSDSTTPYMVSWSLQSESSDSDWNRFNLGFSSSSFGGNFPADDCVGGIEKAESLSRSHRLAEKRRRDRINSHLTALRKLVPNSDKLDKAALLATVIEQVKELKQKAAESPIFQDLPTEADEVTVQPETISDFESNTNTIIFKASFCCEDQPEAISEIIRVLTKLQLETIQAEIISVGGRMRINFILKDSNCNETTNIAASAKALKQSLCSALNRITSSSTTTSSVCRIRSKRQRWFLSSHYSHNE.

The bHLH domain maps to 62 to 111 (SLSRSHRLAEKRRRDRINSHLTALRKLVPNSDKLDKAALLATVIEQVKEL).

Homodimer. Expressed constitutively in roots, stems, and flowers.

It localises to the nucleus. The sequence is that of Transcription factor bHLH51 (BHLH51) from Arabidopsis thaliana (Mouse-ear cress).